We begin with the raw amino-acid sequence, 517 residues long: UDP-N-acetylmuramyl-tripeptide synthetase (517 aa).

A UDP-N-acetyl-alpha-D-muramoyl-L-alanyl-D-glutamate-binding site is contributed by Thr-48. Gly-125–Thr-131 is an ATP binding site. UDP-N-acetyl-alpha-D-muramoyl-L-alanyl-D-glutamate contacts are provided by residues Thr-169–Thr-170, Ser-196, and Arg-204. The residue at position 238 (Lys-238) is an N6-carboxylysine.

It belongs to the MurCDEF family. MurE subfamily. Carboxylation is probably crucial for Mg(2+) binding and, consequently, for the gamma-phosphate positioning of ATP.

It is found in the cytoplasm. Its pathway is cell wall biogenesis; peptidoglycan biosynthesis. In terms of biological role, catalyzes the addition of an amino acid to the nucleotide precursor UDP-N-acetylmuramoyl-L-alanyl-D-glutamate (UMAG) in the biosynthesis of bacterial cell-wall peptidoglycan. This is UDP-N-acetylmuramyl-tripeptide synthetase from Bifidobacterium longum (strain NCC 2705).